Here is a 463-residue protein sequence, read N- to C-terminus: Quinolone resistance protein NorB (463 aa).

The next 14 membrane-spanning stretches (helical) occupy residues 17 to 37 (IGIV…VNVV), 53 to 73 (IAVS…GGLA), 86 to 106 (IILN…LLLI), 107 to 127 (IGRL…LSII), 142 to 162 (YWSI…GAVA), 165 to 185 (LGWR…LFLI), 201 to 221 (FDIK…ILIT), 230 to 250 (SLLF…FIVL), 273 to 293 (TASN…NTFV), 299 to 319 (YSSL…LIMI), 334 to 354 (PMLI…LTFL), 357 to 377 (IFYV…LGIY), 403 to 423 (MASA…YAIV), and 435 to 455 (IALW…LLLV).

The protein belongs to the major facilitator superfamily. TCR/Tet family.

Its subcellular location is the cell membrane. Functionally, multidrug efflux pump that acts independently of NorA and is one of the factors that confers resistance against diverse quinolones and chemical compounds. The chain is Quinolone resistance protein NorB (norB) from Staphylococcus aureus (strain COL).